A 326-amino-acid chain; its full sequence is Probable cell division protein WhiA (326 aa).

A DNA-binding region (H-T-H motif) is located at residues 275 to 308 (SLEELGQLAEPPMTKDAVAGRIRRLLAMADKRAR).

It belongs to the WhiA family.

Functionally, involved in cell division and chromosome segregation. The polypeptide is Probable cell division protein WhiA (Saccharopolyspora erythraea (strain ATCC 11635 / DSM 40517 / JCM 4748 / NBRC 13426 / NCIMB 8594 / NRRL 2338)).